The sequence spans 59 residues: UPF0434 protein PMI0721 (59 aa).

The protein belongs to the UPF0434 family.

This Proteus mirabilis (strain HI4320) protein is UPF0434 protein PMI0721.